Here is a 3546-residue protein sequence, read N- to C-terminus: Ubiquitin carboxyl-terminal hydrolase 34 (3546 aa).

Phosphoserine is present on residues Ser352, Ser486, Ser487, and Ser490. Disordered stretches follow at residues 502–535, 550–679, and 1459–1478; these read KEEE…SGGS, VQQR…VFNT, and TGSY…DQVE. The span at 511 to 524 shows a compositional bias: low complexity; it reads APSPWSPAASPQSS. 2 stretches are compositionally biased toward polar residues: residues 525-534 and 560-570; these read DNSDTHQSGG and SMQGSSDETAN. Residues 571–590 show a composition bias toward low complexity; sequence SGEDGSSGPGSSSGHSDGSS. Polar residues predominate over residues 591–609; sequence NEVNSSHASQSAGSPGSEV. A compositionally biased stretch (acidic residues) spans 610 to 627; it reads QSEDIADIEALKEEDEDD. A Phosphoserine modification is found at Ser649. A compositionally biased stretch (polar residues) spans 659 to 671; the sequence is QGMSERNGTSSGT. Residues 1467–1477 are compositionally biased toward acidic residues; that stretch reads PDSDDSSEDQV. Ser1469 is modified (phosphoserine). Residues 1894-2239 form the USP domain; sequence VGLTNLGATC…SAYMLFYKRM (346 aa). The active-site Nucleophile is the Cys1903. His2164 acts as the Proton acceptor in catalysis. At Ser2488 the chain carries Phosphoserine. The interval 3331–3443 is disordered; it reads NSLQEQEAKE…HAEEQSNNGR (113 aa). Residues 3336–3347 are compositionally biased toward basic and acidic residues; the sequence is QEAKERKTKDDE. 2 positions are modified to phosphoserine: Ser3358 and Ser3359. Residue Thr3381 is modified to Phosphothreonine. Phosphoserine occurs at positions 3386 and 3406. Residues 3421 to 3432 show a composition bias toward polar residues; the sequence is SSFSEDMSNIRS. Over residues 3433 to 3443 the composition is skewed to basic and acidic residues; sequence QHAEEQSNNGR. Ser3503 bears the Phosphoserine mark.

Belongs to the peptidase C19 family. As to quaternary structure, interacts with AXIN1 and AXIN2. As to expression, expressed in brain at low level.

The enzyme catalyses Thiol-dependent hydrolysis of ester, thioester, amide, peptide and isopeptide bonds formed by the C-terminal Gly of ubiquitin (a 76-residue protein attached to proteins as an intracellular targeting signal).. Functionally, ubiquitin hydrolase that can remove conjugated ubiquitin from AXIN1 and AXIN2, thereby acting as a regulator of Wnt signaling pathway. Acts as an activator of the Wnt signaling pathway downstream of the beta-catenin destruction complex by deubiquitinating and stabilizing AXIN1 and AXIN2, leading to promote nuclear accumulation of AXIN1 and AXIN2 and positively regulate beta-catenin (CTNBB1)-mediated transcription. Recognizes and hydrolyzes the peptide bond at the C-terminal Gly of ubiquitin. Involved in the processing of poly-ubiquitin precursors as well as that of ubiquitinated proteins. This Homo sapiens (Human) protein is Ubiquitin carboxyl-terminal hydrolase 34 (USP34).